We begin with the raw amino-acid sequence, 285 residues long: NADPH-dependent 7-cyano-7-deazaguanine reductase (285 aa).

91–93 contacts substrate; sequence IES. 93–94 is an NADPH binding site; that stretch reads SK. Catalysis depends on cysteine 192, which acts as the Thioimide intermediate. The Proton donor role is filled by aspartate 199. A substrate-binding site is contributed by 231–232; it reads HE. An NADPH-binding site is contributed by 260 to 261; it reads RG.

This sequence belongs to the GTP cyclohydrolase I family. QueF type 2 subfamily. Homodimer.

Its subcellular location is the cytoplasm. It catalyses the reaction 7-aminomethyl-7-carbaguanine + 2 NADP(+) = 7-cyano-7-deazaguanine + 2 NADPH + 3 H(+). It participates in tRNA modification; tRNA-queuosine biosynthesis. Catalyzes the NADPH-dependent reduction of 7-cyano-7-deazaguanine (preQ0) to 7-aminomethyl-7-deazaguanine (preQ1). The sequence is that of NADPH-dependent 7-cyano-7-deazaguanine reductase from Psychromonas ingrahamii (strain DSM 17664 / CCUG 51855 / 37).